The primary structure comprises 457 residues: MALWGGRFTQAADQRFKQFNDSLRFDYRLAEQDIVGSVAWSKALVTVGVLTAEEQAQLEEALNVLLEDVRARPQQILESDAEDIHSWVEGKLIDKVGQLGKKLHTGRSRNDQVATDLKLWCKDTVSELLTANRQLQSALVETAQNNQDAVMPGYTHLQRAQPVTFAHWCLAYVEMLARDESRLQDALKRLDVSPLGCGALAGTAYEIDREQLAGWLGFASATRNSLDSVSDRDHVLELLSAAAIGMVHLSRFAEDLIFFNTGEAGFVELSDRVTSGSSLMPQKKNPDALELIRGKCGRVQGALTGMMMTLKGLPLAYNKDMQEDKEGLFDALDTWLDCLHMAALVLDGIQVKRPRCQEAAQQGYANATELADYLVAKGVPFREAHHIVGEAVVEAIRQGKPLEDLPLSELQKFSQVIGEDVYPILSLQSCLEKRAAKGGVSPQQVAQAIAFAQARLE.

It belongs to the lyase 1 family. Argininosuccinate lyase subfamily.

It is found in the cytoplasm. It catalyses the reaction 2-(N(omega)-L-arginino)succinate = fumarate + L-arginine. It participates in amino-acid biosynthesis; L-arginine biosynthesis; L-arginine from L-ornithine and carbamoyl phosphate: step 3/3. The protein is Argininosuccinate lyase of Shigella flexneri serotype 5b (strain 8401).